The chain runs to 142 residues: Mini-ribonuclease 3 (142 aa).

D33 is a catalytic residue.

The protein belongs to the MrnC RNase family. In terms of assembly, homodimer. Requires Mg(2+) as cofactor.

The protein localises to the cytoplasm. Functionally, involved in correct processing of both the 5' and 3' ends of 23S rRNA precursor. Processes 30S rRNA precursor transcript even in absence of ribonuclease 3 (Rnc); Rnc processes 30S rRNA into smaller rRNA precursors. In Thermoanaerobacter sp. (strain X514), this protein is Mini-ribonuclease 3.